We begin with the raw amino-acid sequence, 307 residues long: Aspartate carbamoyltransferase catalytic subunit (307 aa).

The carbamoyl phosphate site is built by Arg58 and Thr59. Lys86 contributes to the L-aspartate binding site. The carbamoyl phosphate site is built by Arg108, His138, and Gln141. Residues Arg171 and Arg223 each contribute to the L-aspartate site. Residues Ala264 and Pro265 each coordinate carbamoyl phosphate.

This sequence belongs to the aspartate/ornithine carbamoyltransferase superfamily. ATCase family. As to quaternary structure, heterododecamer (2C3:3R2) of six catalytic PyrB chains organized as two trimers (C3), and six regulatory PyrI chains organized as three dimers (R2).

The catalysed reaction is carbamoyl phosphate + L-aspartate = N-carbamoyl-L-aspartate + phosphate + H(+). It functions in the pathway pyrimidine metabolism; UMP biosynthesis via de novo pathway; (S)-dihydroorotate from bicarbonate: step 2/3. Catalyzes the condensation of carbamoyl phosphate and aspartate to form carbamoyl aspartate and inorganic phosphate, the committed step in the de novo pyrimidine nucleotide biosynthesis pathway. The chain is Aspartate carbamoyltransferase catalytic subunit from Streptococcus suis (strain 98HAH33).